The primary structure comprises 132 residues: Small ribosomal subunit protein uS8 (132 aa).

It belongs to the universal ribosomal protein uS8 family. As to quaternary structure, part of the 30S ribosomal subunit. Contacts proteins S5 and S12.

One of the primary rRNA binding proteins, it binds directly to 16S rRNA central domain where it helps coordinate assembly of the platform of the 30S subunit. This is Small ribosomal subunit protein uS8 from Ureaplasma urealyticum serovar 10 (strain ATCC 33699 / Western).